Here is a 512-residue protein sequence, read N- to C-terminus: ATP synthase subunit alpha (512 aa).

169 to 176 serves as a coordination point for ATP; it reads GDRQTGKT.

This sequence belongs to the ATPase alpha/beta chains family. F-type ATPases have 2 components, CF(1) - the catalytic core - and CF(0) - the membrane proton channel. CF(1) has five subunits: alpha(3), beta(3), gamma(1), delta(1), epsilon(1). CF(0) has three main subunits: a(1), b(2) and c(9-12). The alpha and beta chains form an alternating ring which encloses part of the gamma chain. CF(1) is attached to CF(0) by a central stalk formed by the gamma and epsilon chains, while a peripheral stalk is formed by the delta and b chains.

The protein resides in the cell inner membrane. The catalysed reaction is ATP + H2O + 4 H(+)(in) = ADP + phosphate + 5 H(+)(out). Produces ATP from ADP in the presence of a proton gradient across the membrane. The alpha chain is a regulatory subunit. In Azoarcus sp. (strain BH72), this protein is ATP synthase subunit alpha.